The primary structure comprises 474 residues: MASAMRGEKCERSRIRELVLILSLITMAGDSRATPFDPSFFIEGVQSEVVNPFNRTILNRFNLTEEQILSIQNRSNPNMRDDSAQSSNQQYLQQVATQRLNDIFKRVQKAISNEPNGSASKEKAGFPICNAETTNPEDWSLGNNVTLQFASSVFISNNDDRLSSALLRLYKTNPGQTREHNPGQASTQPISTENPGNTAPNCAEQPPVGPQIRVTVSIVHQQRKKQRKKRTCNTAMLSSSSTGWVEIDVKCALAYWEQQHRQQLRQQQPLQPQLTASVVGILMIEVHDDEENLLRPGLYFAPPTCDQADIAVPWSVYRTEPFKSHLASWTLPRKPRLDIFFNGSNSMKNSYNTPKSRAFIESTTSNSPTIDNQLDESGEYESQQRVHAPLVHHRRHHHNHQQPESESESAQLEAEIEAEELMSSASNSEQQMEPISNHHRHRTGHHHPHHQLHQHHHHHHRHTKHHRIPAHKQE.

An N-terminal signal peptide occupies residues 1 to 33 (MASAMRGEKCERSRIRELVLILSLITMAGDSRA). N54, N62, N73, N116, and N144 each carry an N-linked (GlcNAc...) asparagine glycan. A disordered region spans residues 173 to 195 (NPGQTREHNPGQASTQPISTENP). Residues 183–195 (GQASTQPISTENP) show a composition bias toward polar residues. Residue N342 is glycosylated (N-linked (GlcNAc...) asparagine). Over residues 359-372 (FIESTTSNSPTIDN) the composition is skewed to polar residues. The interval 359–474 (FIESTTSNSP…HHRIPAHKQE (116 aa)) is disordered. Basic residues-rich tracts occupy residues 390–400 (LVHHRRHHHNH) and 437–474 (NHHR…HKQE).

In terms of tissue distribution, synthesized in some glial cells and secreted.

The protein resides in the secreted. Functionally, negatively regulates proliferation of neuronal precursor cells, thereby controlling the timing of postembryonic neurogenesis. The sequence is that of Protein anachronism (ana) from Drosophila melanogaster (Fruit fly).